The sequence spans 229 residues: Large ribosomal subunit protein uL1 (229 aa).

This sequence belongs to the universal ribosomal protein uL1 family. As to quaternary structure, part of the 50S ribosomal subunit.

Its function is as follows. Binds directly to 23S rRNA. The L1 stalk is quite mobile in the ribosome, and is involved in E site tRNA release. Protein L1 is also a translational repressor protein, it controls the translation of the L11 operon by binding to its mRNA. The chain is Large ribosomal subunit protein uL1 from Lacticaseibacillus casei (strain BL23) (Lactobacillus casei).